Reading from the N-terminus, the 61-residue chain is Metallothionein-1E (61 aa).

Methionine 1 is modified (N-acetylmethionine). Residues 1–29 (MDPNCSCATGGSCTCAGSCKCKECKCTSC) are beta. A divalent metal cation contacts are provided by cysteine 5, cysteine 7, cysteine 13, cysteine 15, cysteine 19, cysteine 21, cysteine 24, cysteine 26, cysteine 29, cysteine 33, cysteine 34, cysteine 36, cysteine 37, cysteine 41, cysteine 44, cysteine 48, cysteine 50, cysteine 57, cysteine 59, and cysteine 60. Residues 30-61 (KKSCCSCCPVGCAKCAQGCVCKGASEKCSCCA) form an alpha region.

It belongs to the metallothionein superfamily. Type 1 family. In terms of assembly, monomer.

Functionally, metallothioneins have a high content of cysteine residues that bind various heavy metals; these proteins are transcriptionally regulated by both heavy metals and glucocorticoids. The polypeptide is Metallothionein-1E (MT1E) (Homo sapiens (Human)).